The sequence spans 235 residues: Acyl-protein thioesterase 1 (235 aa).

Active-site charge relay system residues include serine 119, aspartate 172, and histidine 206.

Belongs to the AB hydrolase superfamily. AB hydrolase 2 family.

It localises to the cytoplasm. It is found in the nucleus. The catalysed reaction is S-hexadecanoyl-L-cysteinyl-[protein] + H2O = L-cysteinyl-[protein] + hexadecanoate + H(+). Functionally, hydrolyzes fatty acids from S-acylated cysteine residues in proteins with a strong preference for palmitoylated G-alpha proteins over other acyl substrates. Mediates the deacylation of G-alpha proteins such as GPA1 in vivo, but has weak or no activity toward palmitoylated Ras proteins. Has weak lysophospholipase activity in vitro; however such activity may not exist in vivo. The sequence is that of Acyl-protein thioesterase 1 from Eremothecium gossypii (strain ATCC 10895 / CBS 109.51 / FGSC 9923 / NRRL Y-1056) (Yeast).